The primary structure comprises 304 residues: Recombination-associated protein RdgC (304 aa).

The protein belongs to the RdgC family.

It is found in the cytoplasm. The protein localises to the nucleoid. Its function is as follows. May be involved in recombination. The polypeptide is Recombination-associated protein RdgC (Shewanella sp. (strain ANA-3)).